The primary structure comprises 1318 residues: DNA-directed RNA polymerase subunit beta' (1318 aa).

Residues Cys60, Cys62, Cys75, and Cys78 each coordinate Zn(2+). Residues Asp535, Asp537, and Asp539 each contribute to the Mg(2+) site. The Zn(2+) site is built by Cys890, Cys967, Cys974, and Cys977.

This sequence belongs to the RNA polymerase beta' chain family. In terms of assembly, the RNAP catalytic core consists of 2 alpha, 1 beta, 1 beta' and 1 omega subunit. When a sigma factor is associated with the core the holoenzyme is formed, which can initiate transcription. The cofactor is Mg(2+). It depends on Zn(2+) as a cofactor.

It carries out the reaction RNA(n) + a ribonucleoside 5'-triphosphate = RNA(n+1) + diphosphate. In terms of biological role, DNA-dependent RNA polymerase catalyzes the transcription of DNA into RNA using the four ribonucleoside triphosphates as substrates. This Rhodococcus erythropolis (strain PR4 / NBRC 100887) protein is DNA-directed RNA polymerase subunit beta'.